A 156-amino-acid polypeptide reads, in one-letter code: Small ribosomal subunit protein uS7 (156 aa).

The protein belongs to the universal ribosomal protein uS7 family. As to quaternary structure, part of the 30S ribosomal subunit. Contacts proteins S9 and S11.

One of the primary rRNA binding proteins, it binds directly to 16S rRNA where it nucleates assembly of the head domain of the 30S subunit. Is located at the subunit interface close to the decoding center, probably blocks exit of the E-site tRNA. The sequence is that of Small ribosomal subunit protein uS7 from Rhodococcus erythropolis (strain PR4 / NBRC 100887).